The primary structure comprises 476 residues: MESIQSTMKNINLYDIKAAVRKAQNVVMNYTSMEARVREATNNEPWGASTSLMMEIAQGTHNYSQLNEILPMIYRRFTEKTAEEWRQIYKALQLLEFLVKNGSERVVDDARAHQATIKMLRNFHYIDHRQKDQGLNVRTRAKELVELLNDSERIRKERKRARQNRGKFIGVGSDGDSRISTSSKSRFPSFGSSRGSYRTRVYGDGGGFTDYGNGYHDSSSMSDSRDASDNDVEEYNEDGDGGSSDAATANSTRGSRRTTTKQSDKAPEQPKQESAMIDLLGLDNEPSPAQPQTNTSAPLAFEDDGFGDFQSSAAAPASSTLNNASLFMGSQTASTAAKNDDDAFDDFQSAPSAKPASNTAAFSSISFGGFNSLNQLPTSSSAFTPQPTTFNTGYTSAFGMSSGLSNTSSQAGLGLTSQQPTAAKSSGSNGDAFGSLWSSAVNKVHQENSTRERVVSSSSEPVSKTQNFLDNDNLLL.

In terms of domain architecture, ENTH spans Tyr30–Ile154. Disordered regions lie at residues Glu157–Arg198, Asn213–Asp308, Gln410–Asn429, and Val444–Asp472. Ser173 carries the post-translational modification Phosphoserine. Composition is skewed to low complexity over residues Arg178–Arg198 and Asn213–Ser222. Phosphoserine is present on Ser228. Residues Asp229–Asp240 are compositionally biased toward acidic residues. Residue Tyr235 is modified to Phosphotyrosine. Residues Ser243 and Ser244 each carry the phosphoserine modification. Positions Gln262–Lys271 are enriched in basic and acidic residues. The span at Val444–Val454 shows a compositional bias: basic and acidic residues. Ser459 carries the phosphoserine modification.

The chain is ENTH domain-containing protein C794.11c from Schizosaccharomyces pombe (strain 972 / ATCC 24843) (Fission yeast).